Here is a 508-residue protein sequence, read N- to C-terminus: Pyruvate kinase (508 aa).

Arg56 is a binding site for substrate. 4 residues coordinate K(+): Asn58, Ser60, Asp90, and Thr91. Residue 58–61 (NFSH) coordinates ATP. Residues Arg97 and Lys185 each coordinate ATP. Mg(2+) is bound at residue Glu251. The substrate site is built by Gly274, Asp275, and Thr307. Asp275 serves as a coordination point for Mg(2+).

Belongs to the pyruvate kinase family. As to quaternary structure, homotetramer. Requires Mg(2+) as cofactor. The cofactor is K(+).

It carries out the reaction pyruvate + ATP = phosphoenolpyruvate + ADP + H(+). It functions in the pathway carbohydrate degradation; glycolysis; pyruvate from D-glyceraldehyde 3-phosphate: step 5/5. Its activity is regulated as follows. Regulated by phosphoenolpyruvate substrate and is allosterically activated by ribose-5-phosphate, AMP and other nucleoside monophosphates but not by fructose-1,6-bisphosphate. The sequence is that of Pyruvate kinase (pyk) from Mycoplasma pneumoniae (strain ATCC 29342 / M129 / Subtype 1) (Mycoplasmoides pneumoniae).